The primary structure comprises 479 residues: Ribulose bisphosphate carboxylase large chain (479 aa).

Residues 1-2 (MS) constitute a propeptide that is removed on maturation. 2 residues coordinate substrate: asparagine 123 and threonine 173. The active-site Proton acceptor is lysine 175. Position 177 (lysine 177) interacts with substrate. Residues lysine 201, aspartate 203, and glutamate 204 each coordinate Mg(2+). Lysine 201 is subject to N6-carboxylysine. Serine 208 bears the Phosphoserine mark. The active-site Proton acceptor is histidine 294. 2 residues coordinate substrate: arginine 295 and histidine 327. Threonine 330 carries the post-translational modification Phosphothreonine. Serine 379 is a binding site for substrate.

This sequence belongs to the RuBisCO large chain family. Type I subfamily. Heterohexadecamer of 8 large chains and 8 small chains; disulfide-linked. The disulfide link is formed within the large subunit homodimers. Mg(2+) serves as cofactor. Post-translationally, the disulfide bond which can form in the large chain dimeric partners within the hexadecamer appears to be associated with oxidative stress and protein turnover.

It is found in the plastid. The protein resides in the chloroplast. The catalysed reaction is 2 (2R)-3-phosphoglycerate + 2 H(+) = D-ribulose 1,5-bisphosphate + CO2 + H2O. It catalyses the reaction D-ribulose 1,5-bisphosphate + O2 = 2-phosphoglycolate + (2R)-3-phosphoglycerate + 2 H(+). In terms of biological role, ruBisCO catalyzes two reactions: the carboxylation of D-ribulose 1,5-bisphosphate, the primary event in carbon dioxide fixation, as well as the oxidative fragmentation of the pentose substrate in the photorespiration process. Both reactions occur simultaneously and in competition at the same active site. The sequence is that of Ribulose bisphosphate carboxylase large chain from Capsella bursa-pastoris (Shepherd's purse).